The following is an 807-amino-acid chain: Glycerol-3-phosphate acyltransferase (807 aa).

Residues 308 to 313 carry the HXXXXD motif motif; it reads CHRSHM.

It belongs to the GPAT/DAPAT family.

It is found in the cell inner membrane. It catalyses the reaction sn-glycerol 3-phosphate + an acyl-CoA = a 1-acyl-sn-glycero-3-phosphate + CoA. It participates in phospholipid metabolism; CDP-diacylglycerol biosynthesis; CDP-diacylglycerol from sn-glycerol 3-phosphate: step 1/3. The polypeptide is Glycerol-3-phosphate acyltransferase (Shewanella frigidimarina (strain NCIMB 400)).